The primary structure comprises 83 residues: Cytochrome b559 subunit alpha (83 aa).

The chain crosses the membrane as a helical span at residues 21 to 35; sequence VIHSITIPSLFIAGW. Residue His-23 coordinates heme.

Belongs to the PsbE/PsbF family. As to quaternary structure, heterodimer of an alpha subunit and a beta subunit. PSII is composed of 1 copy each of membrane proteins PsbA, PsbB, PsbC, PsbD, PsbE, PsbF, PsbH, PsbI, PsbJ, PsbK, PsbL, PsbM, PsbT, PsbX, PsbY, PsbZ, Psb30/Ycf12, at least 3 peripheral proteins of the oxygen-evolving complex and a large number of cofactors. It forms dimeric complexes. The cofactor is heme b.

The protein resides in the plastid. The protein localises to the chloroplast thylakoid membrane. This b-type cytochrome is tightly associated with the reaction center of photosystem II (PSII). PSII is a light-driven water:plastoquinone oxidoreductase that uses light energy to abstract electrons from H(2)O, generating O(2) and a proton gradient subsequently used for ATP formation. It consists of a core antenna complex that captures photons, and an electron transfer chain that converts photonic excitation into a charge separation. This is Cytochrome b559 subunit alpha from Amborella trichopoda.